The following is a 156-amino-acid chain: Ribosomal RNA large subunit methyltransferase H (156 aa).

S-adenosyl-L-methionine is bound by residues G104 and 123-128 (LSAMTL).

The protein belongs to the RNA methyltransferase RlmH family. In terms of assembly, homodimer.

It localises to the cytoplasm. It catalyses the reaction pseudouridine(1915) in 23S rRNA + S-adenosyl-L-methionine = N(3)-methylpseudouridine(1915) in 23S rRNA + S-adenosyl-L-homocysteine + H(+). Specifically methylates the pseudouridine at position 1915 (m3Psi1915) in 23S rRNA. The protein is Ribosomal RNA large subunit methyltransferase H of Chromobacterium violaceum (strain ATCC 12472 / DSM 30191 / JCM 1249 / CCUG 213 / NBRC 12614 / NCIMB 9131 / NCTC 9757 / MK).